A 371-amino-acid polypeptide reads, in one-letter code: DNA replication and repair protein RecF (371 aa).

Residue 30–37 (GENAQGKT) coordinates ATP.

Belongs to the RecF family.

Its subcellular location is the cytoplasm. The RecF protein is involved in DNA metabolism; it is required for DNA replication and normal SOS inducibility. RecF binds preferentially to single-stranded, linear DNA. It also seems to bind ATP. This chain is DNA replication and repair protein RecF, found in Staphylococcus epidermidis (strain ATCC 12228 / FDA PCI 1200).